Reading from the N-terminus, the 463-residue chain is Metalloprotease slr0863 (463 aa).

Belongs to the peptidase U62 family.

In terms of biological role, probable metalloprotease. This chain is Metalloprotease slr0863, found in Synechocystis sp. (strain ATCC 27184 / PCC 6803 / Kazusa).